We begin with the raw amino-acid sequence, 260 residues long: Ubiquinone/menaquinone biosynthesis C-methyltransferase UbiE (260 aa).

S-adenosyl-L-methionine is bound by residues Thr-83, Asp-104, and 132 to 133 (NA).

This sequence belongs to the class I-like SAM-binding methyltransferase superfamily. MenG/UbiE family.

It carries out the reaction a 2-demethylmenaquinol + S-adenosyl-L-methionine = a menaquinol + S-adenosyl-L-homocysteine + H(+). It catalyses the reaction a 2-methoxy-6-(all-trans-polyprenyl)benzene-1,4-diol + S-adenosyl-L-methionine = a 5-methoxy-2-methyl-3-(all-trans-polyprenyl)benzene-1,4-diol + S-adenosyl-L-homocysteine + H(+). It participates in quinol/quinone metabolism; menaquinone biosynthesis; menaquinol from 1,4-dihydroxy-2-naphthoate: step 2/2. It functions in the pathway cofactor biosynthesis; ubiquinone biosynthesis. Methyltransferase required for the conversion of demethylmenaquinol (DMKH2) to menaquinol (MKH2) and the conversion of 2-polyprenyl-6-methoxy-1,4-benzoquinol (DDMQH2) to 2-polyprenyl-3-methyl-6-methoxy-1,4-benzoquinol (DMQH2). The polypeptide is Ubiquinone/menaquinone biosynthesis C-methyltransferase UbiE (Bartonella quintana (strain Toulouse) (Rochalimaea quintana)).